We begin with the raw amino-acid sequence, 663 residues long: Translation factor GUF1, mitochondrial (663 aa).

The transit peptide at 1–37 (MRGCLQSVRLLTTALGQSPRRPLPFAFRLPPNASRLF) directs the protein to the mitochondrion. One can recognise a tr-type G domain in the interval 65 to 245 (ERYRNFCIVA…TIVEQIPAPI (181 aa)). GTP is bound by residues 74 to 81 (AHVDHGKS), 138 to 142 (DTPGH), and 192 to 195 (NKVD).

This sequence belongs to the TRAFAC class translation factor GTPase superfamily. Classic translation factor GTPase family. LepA subfamily.

The protein resides in the mitochondrion inner membrane. It catalyses the reaction GTP + H2O = GDP + phosphate + H(+). Promotes mitochondrial protein synthesis. May act as a fidelity factor of the translation reaction, by catalyzing a one-codon backward translocation of tRNAs on improperly translocated ribosomes. Binds to mitochondrial ribosomes in a GTP-dependent manner. The sequence is that of Translation factor GUF1, mitochondrial from Uncinocarpus reesii (strain UAMH 1704).